Consider the following 299-residue polypeptide: MLFPTALIFGCWALVIEGADNRRPIWNMGHMVNEVYQIDEFVDLGANSIETDITFDDDAMAEYSYHGVPCDCRRWCHKWEYVNVFLDGLRRATTPGDSKYRPELTLVVFDLKTGDLSSSTAYKGGKLFAQKLLDRYWNGGNNGGRAYIIISIPDIDHYAFITGFREALKNANHEELLDKVGYDFSGNDDLSSTRTALNKAGVKDREHVWQSDGITNCILRGLDRVREAVRNRDSSNGYINKVYYWTIEKYVSVRDALDAGVDGIMTNEPDVIVNVLNEGNYRGRFRLANYDDNPWVTFK.

The N-terminal stretch at 1–18 (MLFPTALIFGCWALVIEG) is a signal peptide. His-30 is a catalytic residue. Residues Glu-50 and Asp-52 each contribute to the Mg(2+) site. The active-site Nucleophile is His-66. Intrachain disulfides connect Cys-70/Cys-76 and Cys-72/Cys-217. Residue Asp-110 coordinates Mg(2+).

This sequence belongs to the arthropod phospholipase D family. Class II subfamily. Class IIa sub-subfamily. Mg(2+) is required as a cofactor. As to expression, expressed by the venom gland.

The protein localises to the secreted. It catalyses the reaction an N-(acyl)-sphingosylphosphocholine = an N-(acyl)-sphingosyl-1,3-cyclic phosphate + choline. The catalysed reaction is an N-(acyl)-sphingosylphosphoethanolamine = an N-(acyl)-sphingosyl-1,3-cyclic phosphate + ethanolamine. The enzyme catalyses a 1-acyl-sn-glycero-3-phosphocholine = a 1-acyl-sn-glycero-2,3-cyclic phosphate + choline. It carries out the reaction a 1-acyl-sn-glycero-3-phosphoethanolamine = a 1-acyl-sn-glycero-2,3-cyclic phosphate + ethanolamine. Dermonecrotic toxins cleave the phosphodiester linkage between the phosphate and headgroup of certain phospholipids (sphingolipid and lysolipid substrates), forming an alcohol (often choline) and a cyclic phosphate. This toxin acts on sphingomyelin (SM) with high activity. It may also act on ceramide phosphoethanolamine (CPE), lysophosphatidylcholine (LPC) and lysophosphatidylethanolamine (LPE), but not on lysophosphatidylserine (LPS), and lysophosphatidylglycerol (LPG). It acts by transphosphatidylation, releasing exclusively cyclic phosphate products as second products. Has hemolytic activity in human erythrocytes in a dose-dependent manner. In vivo, this toxin induces dermonecrosis, edema, hemorrhage, massive inflammatory response, as well as vascular permeability. In addition, thrombus formation has also been detected in dermal blood vessels. It also induces platelet aggregation. It is noteworthy that a Glu-248 replaces the Asp present in paralogs, without decrease in catalytic and hemolytic activities. The chain is Dermonecrotic toxin LiSicTox-alphaIVA1 from Loxosceles intermedia (Brown spider).